The sequence spans 29 residues: Glucagon (29 aa).

This sequence belongs to the glucagon family.

The protein localises to the secreted. Its function is as follows. Glucagon plays a key role in glucose metabolism and homeostasis. Regulates blood glucose by increasing gluconeogenesis and decreasing glycolysis. The polypeptide is Glucagon (gcg) (Polypterus senegalus (Senegal bichir)).